The primary structure comprises 447 residues: tRNA modification GTPase MnmE (447 aa).

The (6S)-5-formyl-5,6,7,8-tetrahydrofolate site is built by arginine 22, glutamate 81, and lysine 121. The TrmE-type G domain maps to 217-373 (GIVLAITGET…LMSEIVSYAE (157 aa)). Position 227 (asparagine 227) interacts with K(+). GTP contacts are provided by residues 227–232 (NTGKSS), 246–252 (SDIPGTT), and 271–274 (DTAG). Serine 231 contacts Mg(2+). K(+) contacts are provided by serine 246, isoleucine 248, and threonine 251. Threonine 252 is a binding site for Mg(2+). Residue lysine 447 participates in (6S)-5-formyl-5,6,7,8-tetrahydrofolate binding.

It belongs to the TRAFAC class TrmE-Era-EngA-EngB-Septin-like GTPase superfamily. TrmE GTPase family. As to quaternary structure, homodimer. Heterotetramer of two MnmE and two MnmG subunits. The cofactor is K(+).

The protein resides in the cytoplasm. In terms of biological role, exhibits a very high intrinsic GTPase hydrolysis rate. Involved in the addition of a carboxymethylaminomethyl (cmnm) group at the wobble position (U34) of certain tRNAs, forming tRNA-cmnm(5)s(2)U34. The polypeptide is tRNA modification GTPase MnmE (Orientia tsutsugamushi (strain Boryong) (Rickettsia tsutsugamushi)).